The sequence spans 226 residues: MSLSNSLGLLGRKVGMMRLFTDDGDTVPVTVVDVSNNRVTQVKTEANDGYDALQVAFGSRKASRVTKPEAGHLAKAGVEAGEILKEFRVTADVAGKYAAGTVVPAADIFAVGQLVDVQGTSIGKGFAGTIKRHKMSSQRASHGNSRSHNVPGSIGMAQDPGRVFPGKRMTGHLGDVTKTTQNLDIVRIDEARQLLMIRGAVPGSKGGFVTVRAAIKAKPTAAKGAN.

Residues 135–158 (MSSQRASHGNSRSHNVPGSIGMAQ) are disordered. Positions 137–150 (SQRASHGNSRSHNV) are enriched in polar residues. The residue at position 158 (Q158) is an N5-methylglutamine.

This sequence belongs to the universal ribosomal protein uL3 family. In terms of assembly, part of the 50S ribosomal subunit. Forms a cluster with proteins L14 and L19. Methylated by PrmB.

Functionally, one of the primary rRNA binding proteins, it binds directly near the 3'-end of the 23S rRNA, where it nucleates assembly of the 50S subunit. The polypeptide is Large ribosomal subunit protein uL3 (Polaromonas naphthalenivorans (strain CJ2)).